The sequence spans 860 residues: Spindle and centriole-associated protein 1 (860 aa).

4 disordered regions span residues 127 to 150 (RKRT…GINQ), 172 to 201 (DDAG…HSNR), 230 to 250 (ATQS…AEDQ), and 294 to 332 (PLLA…TGSS). Polar residues-rich tracts occupy residues 139 to 150 (PDSSQSHTGINQ), 190 to 200 (ELPNSLSQHSN), and 230 to 245 (ATQS…SSEL). The residue at position 236 (T236) is a Phosphothreonine. Position 240 is a phosphoserine (S240). The segment covering 317–329 (SSSTASADRPSST) has biased composition (low complexity). The stretch at 383–439 (RYLKESEIQLRKEVETRQQLEQMLGDHRELIDALTAEILSLREENSTMQARLQQYMV) forms a coiled coil. Positions 623 to 645 (PAFVSLSQPPCSSLPSTQQPRNP) are disordered. Over residues 627–642 (SLSQPPCSSLPSTQQP) the composition is skewed to low complexity. S648 is subject to Phosphoserine. Residues 693–718 (ITSSGGEQGDGLREPRKQGSASEVST) form a disordered region. Positions 729-757 (SSMEERIAELNRQSMEARSKLLQLIEQQK) form a coiled coil. A phosphoserine mark is found at S765, S766, S769, and S824. The segment at 792–860 (GMEASESSKC…GWFALSAHIP (69 aa)) is disordered. Residues 804 to 824 (VSPVSGNSSRRSSGAISNSCS) are compositionally biased toward low complexity.

In terms of assembly, interacts with CEP120.

The protein localises to the cytoplasm. It localises to the cytoskeleton. The protein resides in the microtubule organizing center. It is found in the centrosome. Its subcellular location is the centriole. The protein localises to the spindle. Its function is as follows. Regulator required for centriole duplication, for proper bipolar spindle formation and chromosome congression in mitosis. The chain is Spindle and centriole-associated protein 1 (Spice1) from Mus musculus (Mouse).